Consider the following 568-residue polypeptide: CRISPR-associated exonuclease Cas4/endonuclease Cas1 fusion (568 aa).

The segment at 1 to 209 (MSVVVTRYRG…KCSLAPVCLP (209 aa)) is CRISPR-associated exonuclease Cas4. Residue cysteine 43 coordinates [4Fe-4S] cluster. Aspartate 95 and glutamate 108 together coordinate Mn(2+). 3 residues coordinate [4Fe-4S] cluster: cysteine 198, cysteine 201, and cysteine 207. A CRISPR-associated endonuclease Cas1 region spans residues 232 to 568 (VLHVATPGTR…PGLFATFRLR (337 aa)). Mn(2+) contacts are provided by glutamate 390, histidine 459, and glutamate 474.

It in the N-terminal section; belongs to the CRISPR-associated exonuclease Cas4 family. This sequence in the C-terminal section; belongs to the CRISPR-associated endonuclease Cas1 family. Homodimer, forms a heterotetramer with a Cas2 homodimer. The cofactor is [4Fe-4S] cluster. It depends on Mg(2+) as a cofactor. Requires Mn(2+) as cofactor.

It catalyses the reaction exonucleolytic cleavage in the 5'- to 3'-direction to yield nucleoside 3'-phosphates.. Functionally, CRISPR (clustered regularly interspaced short palindromic repeat), is an adaptive immune system that provides protection against mobile genetic elements (viruses, transposable elements and conjugative plasmids). CRISPR clusters contain spacers, sequences complementary to antecedent mobile elements, and target invading nucleic acids. CRISPR clusters are transcribed and processed into CRISPR RNA (crRNA). The Cas4 region acts as a ssDNA exonuclease, while the Cas1 region acts as a dsDNA endonuclease. Involved in the integration of spacer DNA into the CRISPR cassette. This is CRISPR-associated exonuclease Cas4/endonuclease Cas1 fusion (cas4-cas1) from Myxococcus xanthus (strain DK1622).